The sequence spans 233 residues: Uridylate kinase (233 aa).

ATP contacts are provided by residues 8 to 11 (KLSG), Gly-51, and Arg-55. UMP-binding positions include Asp-68 and 129-136 (TSNPFFTT). 3 residues coordinate ATP: Thr-156, Tyr-162, and Asp-165.

It belongs to the UMP kinase family. As to quaternary structure, homohexamer.

It is found in the cytoplasm. It catalyses the reaction UMP + ATP = UDP + ADP. Its pathway is pyrimidine metabolism; CTP biosynthesis via de novo pathway; UDP from UMP (UMPK route): step 1/1. Inhibited by UTP. Functionally, catalyzes the reversible phosphorylation of UMP to UDP. The protein is Uridylate kinase of Thermosipho melanesiensis (strain DSM 12029 / CIP 104789 / BI429).